Here is a 154-residue protein sequence, read N- to C-terminus: Ribonuclease H (154 aa).

Residues 1–142 (MTKQVEIFTD…CDELARQGAN (142 aa)) enclose the RNase H type-1 domain. Positions 10, 48, 70, and 134 each coordinate Mg(2+).

This sequence belongs to the RNase H family. Monomer. Mg(2+) is required as a cofactor.

The protein localises to the cytoplasm. The catalysed reaction is Endonucleolytic cleavage to 5'-phosphomonoester.. In terms of biological role, endonuclease that specifically degrades the RNA of RNA-DNA hybrids. The chain is Ribonuclease H from Yersinia pestis bv. Antiqua (strain Antiqua).